The chain runs to 275 residues: Formamidopyrimidine-DNA glycosylase (275 aa).

Proline 2 acts as the Schiff-base intermediate with DNA in catalysis. The Proton donor role is filled by glutamate 3. The active-site Proton donor; for beta-elimination activity is the lysine 58. DNA contacts are provided by histidine 91 and arginine 110. The segment at 238–272 adopts an FPG-type zinc-finger fold; it reads QVYGQTGKPCPRCGQAIVKLKVGGRGTHICPKCQK. Arginine 262 serves as the catalytic Proton donor; for delta-elimination activity.

The protein belongs to the FPG family. Monomer. Zn(2+) serves as cofactor.

It catalyses the reaction Hydrolysis of DNA containing ring-opened 7-methylguanine residues, releasing 2,6-diamino-4-hydroxy-5-(N-methyl)formamidopyrimidine.. The catalysed reaction is 2'-deoxyribonucleotide-(2'-deoxyribose 5'-phosphate)-2'-deoxyribonucleotide-DNA = a 3'-end 2'-deoxyribonucleotide-(2,3-dehydro-2,3-deoxyribose 5'-phosphate)-DNA + a 5'-end 5'-phospho-2'-deoxyribonucleoside-DNA + H(+). In terms of biological role, involved in base excision repair of DNA damaged by oxidation or by mutagenic agents. Acts as a DNA glycosylase that recognizes and removes damaged bases. Has a preference for oxidized purines, such as 7,8-dihydro-8-oxoguanine (8-oxoG). Has AP (apurinic/apyrimidinic) lyase activity and introduces nicks in the DNA strand. Cleaves the DNA backbone by beta-delta elimination to generate a single-strand break at the site of the removed base with both 3'- and 5'-phosphates. The sequence is that of Formamidopyrimidine-DNA glycosylase from Streptococcus pyogenes serotype M28 (strain MGAS6180).